The following is a 276-amino-acid chain: Phospholipid phosphatase 2 (276 aa).

Residues methionine 1 to arginine 4 are Cytoplasmic-facing. Residues tryptophan 5–leucine 25 form a helical membrane-spanning segment. Residues threonine 26 to threonine 51 are Lumenal-facing. Residues isoleucine 52–glycine 72 traverse the membrane as a helical segment. The Cytoplasmic segment spans residues glutamate 73–aspartate 87. A helical transmembrane segment spans residues phenylalanine 88–valine 108. Topologically, residues serine 109–leucine 161 are lumenal. The phosphatase sequence motif I stretch occupies residues lysine 117–proline 125. N-linked (GlcNAc...) asparagine glycosylation is found at asparagine 139 and asparagine 155. A helical membrane pass occupies residues serine 162–valine 182. The segment at tyrosine 164 to histidine 167 is phosphatase sequence motif II. The Proton donors role is filled by histidine 167. The Cytoplasmic segment spans residues glutamine 183–lysine 189. A helical transmembrane segment spans residues tryptophan 190–glycine 210. The Lumenal portion of the chain corresponds to tyrosine 211 to leucine 225. Residues threonine 212–aspartate 223 are phosphatase sequence motif III. Histidine 219 serves as the catalytic Nucleophile. The helical transmembrane segment at valine 226 to phenylalanine 246 threads the bilayer. At lysine 247–proline 276 the chain is on the cytoplasmic side. The disordered stretch occupies residues glutamine 252–proline 276.

Belongs to the PA-phosphatase related phosphoesterase family. Forms functional homodimers and homooligomers. Can also form heterooligomers with PLPP1 and PLPP3. In terms of processing, N-glycosylated. In terms of tissue distribution, expressed in the brain.

It is found in the membrane. The protein localises to the cell membrane. The protein resides in the early endosome membrane. Its subcellular location is the endoplasmic reticulum membrane. It catalyses the reaction a 1,2-diacyl-sn-glycero-3-phosphate + H2O = a 1,2-diacyl-sn-glycerol + phosphate. The catalysed reaction is 1,2-dihexadecanoyl-sn-glycero-3-phosphate + H2O = 1,2-dihexadecanoyl-sn-glycerol + phosphate. It carries out the reaction 1,2-di-(9Z-octadecenoyl)-sn-glycero-3-phosphate + H2O = 1,2-di-(9Z-octadecenoyl)-sn-glycerol + phosphate. The enzyme catalyses a monoacyl-sn-glycero-3-phosphate + H2O = a monoacylglycerol + phosphate. It catalyses the reaction (9Z)-octadecenoyl-sn-glycero-3-phosphate + H2O = (9Z-octadecenoyl)-glycerol + phosphate. The catalysed reaction is sphing-4-enine 1-phosphate + H2O = sphing-4-enine + phosphate. It carries out the reaction an N-acylsphing-4-enine 1-phosphate + H2O = an N-acylsphing-4-enine + phosphate. The enzyme catalyses N-(octanoyl)-sphing-4-enine-1-phosphate + H2O = N-octanoylsphing-4-enine + phosphate. It catalyses the reaction N-(9Z-octadecenoyl)-ethanolamine phosphate + H2O = N-(9Z-octadecenoyl) ethanolamine + phosphate. Its pathway is lipid metabolism; phospholipid metabolism. Magnesium-independent phospholipid phosphatase. Insensitive to N-ethylmaleimide. Its function is as follows. Magnesium-independent phospholipid phosphatase that catalyzes the dephosphorylation of a variety of glycerolipid and sphingolipid phosphate esters including phosphatidate/PA, lysophosphatidate/LPA, sphingosine 1-phosphate/S1P and ceramide 1-phosphate/C1P. Has no apparent extracellular phosphatase activity and therefore most probably acts intracellularly. Also acts on N-oleoyl ethanolamine phosphate/N-(9Z-octadecenoyl)-ethanolamine phosphate, a potential physiological compound. Through dephosphorylation of these bioactive lipid mediators produces new bioactive compounds and may regulate signal transduction in different cellular processes. Indirectly regulates, for instance, cell cycle G1/S phase transition through its phospholipid phosphatase activity. This chain is Phospholipid phosphatase 2, found in Rattus norvegicus (Rat).